The sequence spans 206 residues: Oligoribonuclease (206 aa).

The Exonuclease domain maps to 20–183 (LVWLDMEMTG…ADIHESIDEL (164 aa)). Tyr-141 is an active-site residue.

This sequence belongs to the oligoribonuclease family.

The protein resides in the cytoplasm. Its function is as follows. 3'-to-5' exoribonuclease specific for small oligoribonucleotides. This is Oligoribonuclease from Burkholderia cenocepacia (strain HI2424).